Consider the following 662-residue polypeptide: Transmembrane 9 superfamily member 2 (662 aa).

Residues 1 to 28 (MSSRPPASPPAQGSRLLLLSLLLLGTVP) form the signal peptide. The Lumenal portion of the chain corresponds to 29–299 (GPRPGSAFYL…LESMPHTHIQ (271 aa)). Residues 300-320 (WFSIMNSLVIVLFLSGMVAMI) traverse the membrane as a helical segment. Residues 321–373 (MLRTLHKDIARYNQMDSTEDAQEEFGWKLVHGDIFRPPRKGMLLSVFLGSGTQ) are Cytoplasmic-facing. Residues 374 to 394 (ILIMTFVTLFFACLGFLSPAN) traverse the membrane as a helical segment. Over 395 to 397 (RGA) the chain is Lumenal. A helical membrane pass occupies residues 398–418 (LMTCAVVLWVLLGTPAGYVAA). At 419-436 (RFYKSFGGEKWKTNVLLT) the chain is on the cytoplasmic side. A helical transmembrane segment spans residues 437–457 (SFLCPGIVFADFFIMNLILWG). The Lumenal segment spans residues 458–465 (EGSSAAIP). The helical transmembrane segment at 466–486 (FGTLVAILALWFCISVPLTFI) threads the bilayer. The Cytoplasmic portion of the chain corresponds to 487 to 521 (GAYFGFKKNAIEHPVRTNQIPRQIPEQSFYTKPLP). Residues 522-542 (GIIMGGILPFGCIFIQLFFIL) form a helical membrane-spanning segment. Over 543 to 553 (NSIWSHQMYYM) the chain is Lumenal. The helical transmembrane segment at 554–574 (FGFLFLVFIILVITCSEATIL) threads the bilayer. Residues 575–590 (LCYFHLCAEDYHWQWR) are Cytoplasmic-facing. The chain crosses the membrane as a helical span at residues 591–611 (SFLTSGFTAVYFLIYAIHYFF). Topologically, residues 612–630 (SKLQITGTASTILYFGYTM) are lumenal. A helical transmembrane segment spans residues 631-651 (IMVLIFFLFTGTIGFFACFWF). The Cytoplasmic portion of the chain corresponds to 652–662 (VTKIYSVVKVD).

This sequence belongs to the nonaspanin (TM9SF) (TC 9.A.2) family.

The protein resides in the endosome membrane. The protein localises to the golgi outpost. Its subcellular location is the cytoplasm. It is found in the cytoskeleton. It localises to the microtubule organizing center. In the intracellular compartments, may function as a channel or small molecule transporter. This is Transmembrane 9 superfamily member 2 (Tm9sf2) from Mus musculus (Mouse).